We begin with the raw amino-acid sequence, 382 residues long: Bifunctional enzyme IspD/IspF (382 aa).

Residues 1–225 are 2-C-methyl-D-erythritol 4-phosphate cytidylyltransferase; that stretch reads MTGKPSIAAL…AEERMAMISR (225 aa). A 2-C-methyl-D-erythritol 2,4-cyclodiphosphate synthase region spans residues 225–382; that stretch reads RTAMGFDVHG…AVATVRVPSI (158 aa). A divalent metal cation is bound by residues D231 and H233. Residues 231–233 and 257–258 contribute to the 4-CDP-2-C-methyl-D-erythritol 2-phosphate site; these read DVH and HS. H265 provides a ligand contact to a divalent metal cation. Residues 279–281, 355–358, F362, and R365 each bind 4-CDP-2-C-methyl-D-erythritol 2-phosphate; these read DIG and TTTE.

The protein in the N-terminal section; belongs to the IspD/TarI cytidylyltransferase family. IspD subfamily. It in the C-terminal section; belongs to the IspF family. Requires a divalent metal cation as cofactor.

The catalysed reaction is 2-C-methyl-D-erythritol 4-phosphate + CTP + H(+) = 4-CDP-2-C-methyl-D-erythritol + diphosphate. It carries out the reaction 4-CDP-2-C-methyl-D-erythritol 2-phosphate = 2-C-methyl-D-erythritol 2,4-cyclic diphosphate + CMP. Its pathway is isoprenoid biosynthesis; isopentenyl diphosphate biosynthesis via DXP pathway; isopentenyl diphosphate from 1-deoxy-D-xylulose 5-phosphate: step 2/6. The protein operates within isoprenoid biosynthesis; isopentenyl diphosphate biosynthesis via DXP pathway; isopentenyl diphosphate from 1-deoxy-D-xylulose 5-phosphate: step 4/6. Functionally, bifunctional enzyme that catalyzes the formation of 4-diphosphocytidyl-2-C-methyl-D-erythritol from CTP and 2-C-methyl-D-erythritol 4-phosphate (MEP) (IspD), and catalyzes the conversion of 4-diphosphocytidyl-2-C-methyl-D-erythritol 2-phosphate (CDP-ME2P) to 2-C-methyl-D-erythritol 2,4-cyclodiphosphate (ME-CPP) with a corresponding release of cytidine 5-monophosphate (CMP) (IspF). This is Bifunctional enzyme IspD/IspF from Rhizorhabdus wittichii (strain DSM 6014 / CCUG 31198 / JCM 15750 / NBRC 105917 / EY 4224 / RW1) (Sphingomonas wittichii).